A 314-amino-acid chain; its full sequence is Inositol oxygenase 5 (314 aa).

Residues Arg-54 and 112–114 (DES) contribute to the substrate site. Residues His-125, His-150, and Asp-151 each coordinate Fe cation. Residues Lys-154 and 171-172 (GD) each bind substrate. The Fe cation site is built by His-223, His-249, and Asp-282. 249 to 250 (HS) provides a ligand contact to substrate.

Belongs to the myo-inositol oxygenase family. Fe cation is required as a cofactor. Expressed in flowers and siliques.

It localises to the cytoplasm. The catalysed reaction is myo-inositol + O2 = D-glucuronate + H2O + H(+). Its pathway is polyol metabolism; myo-inositol degradation into D-glucuronate; D-glucuronate from myo-inositol: step 1/1. Its function is as follows. Involved in the biosynthesis of UDP-glucuronic acid (UDP-GlcA), providing nucleotide sugars for cell-wall polymers. May be also involved in plant ascorbate biosynthesis. This Arabidopsis thaliana (Mouse-ear cress) protein is Inositol oxygenase 5 (MIOX5).